A 185-amino-acid polypeptide reads, in one-letter code: Ribosome-recycling factor (185 aa).

Belongs to the RRF family.

It is found in the cytoplasm. Functionally, responsible for the release of ribosomes from messenger RNA at the termination of protein biosynthesis. May increase the efficiency of translation by recycling ribosomes from one round of translation to another. This Campylobacter lari (strain RM2100 / D67 / ATCC BAA-1060) protein is Ribosome-recycling factor.